Consider the following 183-residue polypeptide: Microfibrillar-associated protein 2 (183 aa).

Positions 1–16 (MRAACLFLLFMPGLLA) form a signal peptide, or 18. At Gln-17 the chain carries Pyrrolidone carboxylic acid. Residues Tyr-46, Tyr-47, and Tyr-49 each carry the sulfotyrosine modification. Residues 52–92 (VSPRTPEEQFQSQQQVQQEVIPAPTPEPAAAGDLETEPTEP) form a disordered region. Residues 59 to 70 (EQFQSQQQVQQE) show a composition bias toward low complexity. Positions 153–183 (CRDKFSKCGVMAVSGLCQSVAASCARSCGGC) constitute a ShKT domain. Disulfide bonds link Cys-153-Cys-183, Cys-160-Cys-176, and Cys-169-Cys-180.

Belongs to the MFAP family. Forms a ternary complex with BGN and ELN. Interacts with FBN1 (via N-terminal domain) and FBN2. Post-translationally, forms intermolecular disulfide bonds either with other MAGP-1 molecules or with other components of the microfibrils. May form transglutaminase cross-links. In terms of processing, O-glycosylated.

The protein resides in the secreted. It localises to the extracellular space. It is found in the extracellular matrix. Its function is as follows. Component of the elastin-associated microfibrils. In Mus musculus (Mouse), this protein is Microfibrillar-associated protein 2 (Mfap2).